We begin with the raw amino-acid sequence, 154 residues long: Transcriptional repressor NrdR (154 aa).

A zinc finger lies at 3–34 (CPFCGHAATQVIDTRMSEEGDTVRRRRRCESC). The region spanning 49–139 (PAVVKKNGSR…VYRSFEDLAE (91 aa)) is the ATP-cone domain.

It belongs to the NrdR family. Zn(2+) is required as a cofactor.

Functionally, negatively regulates transcription of bacterial ribonucleotide reductase nrd genes and operons by binding to NrdR-boxes. The sequence is that of Transcriptional repressor NrdR from Ralstonia pickettii (strain 12J).